The following is a 225-amino-acid chain: Class E basic helix-loop-helix protein 23 (225 aa).

Residues 35–104 form a disordered region; sequence EAARGYGTPG…PREQRSLRLS (70 aa). The 55-residue stretch at 100-154 folds into the bHLH domain; the sequence is SLRLSINARERRRMHDLNDALDGLRAVIPYAHSPSVRKLSKIATLLLAKNYILMQ.

It is found in the nucleus. Functionally, may function as transcriptional repressor. May modulate the expression of genes required for the differentiation and/or maintenance of pancreatic and neuronal cell types. May be important for rod bipolar cell maturation. This chain is Class E basic helix-loop-helix protein 23 (BHLHE23), found in Homo sapiens (Human).